Reading from the N-terminus, the 215-residue chain is Adenylate kinase (215 aa).

10 to 15 (GAGKGT) serves as a coordination point for ATP. Residues 30-59 (STGDMLRAAVKAGTELGLKAKSVMDAGNLV) are NMP. AMP-binding positions include T31, R36, 57-59 (NLV), 85-88 (GFPR), and Q92. Positions 122–159 (GRRVHEGSGRIYHTIFNPPKVEGVDDVTGESLVQRKDD) are LID. Residues R123 and 132–133 (IY) each bind ATP. R156 and R167 together coordinate AMP. G201 contacts ATP.

It belongs to the adenylate kinase family. In terms of assembly, monomer.

It is found in the cytoplasm. It carries out the reaction AMP + ATP = 2 ADP. Its pathway is purine metabolism; AMP biosynthesis via salvage pathway; AMP from ADP: step 1/1. Its function is as follows. Catalyzes the reversible transfer of the terminal phosphate group between ATP and AMP. Plays an important role in cellular energy homeostasis and in adenine nucleotide metabolism. In Pseudomonas syringae pv. tomato (strain ATCC BAA-871 / DC3000), this protein is Adenylate kinase.